We begin with the raw amino-acid sequence, 225 residues long: MKQAGGSAEQKRRAGEAAVAEEVTEGAVVGLGTGSTVAHAIRALGAEASDVSGVATSFESRRRAVDAGVTVTSLEAASVDVAIDGADQVADGVLVKGGGAAHTREKYVAASADRFVVVADPSKESDVVDVPVPVAVVPDAWPVVVDRVEALGGTATLRDAERKDGPVVTDTGSLVVDCDFGAIETPEAVAASLSAVPGVVEHGLFVGMADAVYVGTDDGVRVRDP.

Substrate-binding positions include 33–36, 84–87, and 96–99; these read TGST, DGAD, and KGGG. The Proton acceptor role is filled by Glu-105. Lys-123 is a substrate binding site.

Belongs to the ribose 5-phosphate isomerase family. In terms of assembly, homodimer.

The enzyme catalyses aldehydo-D-ribose 5-phosphate = D-ribulose 5-phosphate. It functions in the pathway carbohydrate degradation; pentose phosphate pathway; D-ribose 5-phosphate from D-ribulose 5-phosphate (non-oxidative stage): step 1/1. Functionally, catalyzes the reversible conversion of ribose-5-phosphate to ribulose 5-phosphate. This chain is Ribose-5-phosphate isomerase A, found in Halobacterium salinarum (strain ATCC 29341 / DSM 671 / R1).